Reading from the N-terminus, the 324-residue chain is UDP-N-acetylenolpyruvoylglucosamine reductase (324 aa).

The FAD-binding PCMH-type domain maps to 38–231; that stretch reads AGGSARRLYV…SRERIRSLLK (194 aa). The active site involves R195. S246 functions as the Proton donor in the catalytic mechanism. E316 is an active-site residue.

Belongs to the MurB family. It depends on FAD as a cofactor.

It is found in the cytoplasm. The enzyme catalyses UDP-N-acetyl-alpha-D-muramate + NADP(+) = UDP-N-acetyl-3-O-(1-carboxyvinyl)-alpha-D-glucosamine + NADPH + H(+). The protein operates within cell wall biogenesis; peptidoglycan biosynthesis. Functionally, cell wall formation. This is UDP-N-acetylenolpyruvoylglucosamine reductase from Thiobacillus denitrificans (strain ATCC 25259 / T1).